A 267-amino-acid chain; its full sequence is MATAHHTDQLHSLQTHGIHCGETTIPSQGDELPAYIAKPDQHTGPYPVVIVVQEIFGVHEHIQDICRRLAKQGYLAIAPELYFRQGDAKDYSNINELVNNLVKKVPDRQVLVDLDHTAHWASRHGGDTKKLAITGFCWGGRIAWLYAAHNPQLKAAVAWYGKLVGEKTLFLPKYPVDVAIDLCAPVLGLYGGKDTSIPAEHIETMRQALRAANADAEIIVYPEAGHAFNADYRPSYHAESAQDGWQRMLDWFTQHGVSAIPIPEETQ.

Active-site residues include cysteine 137, aspartate 194, and histidine 226.

This sequence belongs to the dienelactone hydrolase family.

It carries out the reaction 2-(5-oxo-2,5-dihydrofuran-2-ylidene)acetate + H2O = 4-oxohex-2-enedioate + H(+). The polypeptide is Putative carboxymethylenebutenolidase (Yersinia pestis).